We begin with the raw amino-acid sequence, 446 residues long: tRNA-2-methylthio-N(6)-dimethylallyladenosine synthase (446 aa).

Residues 2-119 (KKIYIKTFGC…LPELIAQRRE (118 aa)) enclose the MTTase N-terminal domain. [4Fe-4S] cluster contacts are provided by Cys11, Cys48, Cys82, Cys156, Cys160, and Cys163. In terms of domain architecture, Radical SAM core spans 142–376 (RVEGGAAFVS…RIEAQAQGVN (235 aa)). The 64-residue stretch at 377–440 (RSMVGSVQRV…PHSLRGEAVT (64 aa)) folds into the TRAM domain.

This sequence belongs to the methylthiotransferase family. MiaB subfamily. As to quaternary structure, monomer. Requires [4Fe-4S] cluster as cofactor.

Its subcellular location is the cytoplasm. It carries out the reaction N(6)-dimethylallyladenosine(37) in tRNA + (sulfur carrier)-SH + AH2 + 2 S-adenosyl-L-methionine = 2-methylsulfanyl-N(6)-dimethylallyladenosine(37) in tRNA + (sulfur carrier)-H + 5'-deoxyadenosine + L-methionine + A + S-adenosyl-L-homocysteine + 2 H(+). Catalyzes the methylthiolation of N6-(dimethylallyl)adenosine (i(6)A), leading to the formation of 2-methylthio-N6-(dimethylallyl)adenosine (ms(2)i(6)A) at position 37 in tRNAs that read codons beginning with uridine. The protein is tRNA-2-methylthio-N(6)-dimethylallyladenosine synthase of Thiobacillus denitrificans (strain ATCC 25259 / T1).